The primary structure comprises 235 residues: Demethylmenaquinone methyltransferase (235 aa).

S-adenosyl-L-methionine-binding positions include Thr-58, Asp-79, and 106 to 107; that span reads NA.

Belongs to the class I-like SAM-binding methyltransferase superfamily. MenG/UbiE family.

The enzyme catalyses a 2-demethylmenaquinol + S-adenosyl-L-methionine = a menaquinol + S-adenosyl-L-homocysteine + H(+). Its pathway is quinol/quinone metabolism; menaquinone biosynthesis; menaquinol from 1,4-dihydroxy-2-naphthoate: step 2/2. Functionally, methyltransferase required for the conversion of demethylmenaquinol (DMKH2) to menaquinol (MKH2). The chain is Demethylmenaquinone methyltransferase from Shouchella clausii (strain KSM-K16) (Alkalihalobacillus clausii).